The following is a 307-amino-acid chain: Ribonuclease Z (307 aa).

Residues H61, H63, D65, H66, H138, D208, and H264 each contribute to the Zn(2+) site. D65 functions as the Proton acceptor in the catalytic mechanism.

This sequence belongs to the RNase Z family. Homodimer. Requires Zn(2+) as cofactor.

The enzyme catalyses Endonucleolytic cleavage of RNA, removing extra 3' nucleotides from tRNA precursor, generating 3' termini of tRNAs. A 3'-hydroxy group is left at the tRNA terminus and a 5'-phosphoryl group is left at the trailer molecule.. Functionally, zinc phosphodiesterase, which displays some tRNA 3'-processing endonuclease activity. Probably involved in tRNA maturation, by removing a 3'-trailer from precursor tRNA. Also shows activity toward a broad range of substrates, such as intron containing pre-tRNAs, 5' extended precursors and non-RNA substrates. In Pyrococcus furiosus (strain ATCC 43587 / DSM 3638 / JCM 8422 / Vc1), this protein is Ribonuclease Z.